A 417-amino-acid polypeptide reads, in one-letter code: Phosphoglycerate kinase 1 (417 aa).

Ser2 bears the N-acetylserine mark. A phosphoserine mark is found at Ser2 and Ser4. At Lys6 the chain carries N6-succinyllysine. Lys11 bears the N6-acetyllysine mark. (2R)-3-phosphoglycerate contacts are provided by Val23, Asp24, Phe25, Asn26, Gln38, and Arg39. The interval 38–43 (QRIKAA) is mitochondrial targeting region exposed following cis-trans isomerization by PIN1 and recognized by the TOM complex for mitochondrial translocation of the protein. At Lys48 the chain carries N6-acetyllysine; alternate. Lys48 carries the N6-succinyllysine; alternate modification. Residues Ser62, His63, Gly65, and Arg66 each coordinate (2R)-3-phosphoglycerate. Lys75 is modified (N6-acetyllysine). Tyr76 bears the Phosphotyrosine mark. N6-acetyllysine is present on residues Lys86 and Lys91. Lys97 carries the N6-acetyllysine; alternate modification. Residue Lys97 is modified to N6-(2-hydroxyisobutyryl)lysine; alternate. Positions 122 and 123 each coordinate (2R)-3-phosphoglycerate. The residue at position 131 (Lys131) is an N6-acetyllysine; alternate. Lys131 carries the N6-malonyllysine; alternate modification. The residue at position 146 (Lys146) is an N6-acetyllysine. The (2R)-3-phosphoglycerate site is built by His170 and Arg171. Residue Lys191 is modified to N6-succinyllysine. Phosphotyrosine is present on Tyr196. Lys199 carries the N6-acetyllysine modification. Ser203 bears the Phosphoserine; by MAPK1 mark. Gly214 provides a ligand contact to ADP. Residue Gly214 coordinates CDP. Residues Ala215 and Lys216 each coordinate AMP. Ala215 provides a ligand contact to ATP. Residue Ala215 participates in Mg(2+) binding. Lys216 bears the N6-(2-hydroxyisobutyryl)lysine mark. Positions 218 and 219 each coordinate Mg(2+). Asp219 is a binding site for CDP. Lys220 serves as a coordination point for AMP. ATP is bound at residue Lys220. Position 220 is an N6-(2-hydroxyisobutyryl)lysine (Lys220). Gly238 is a binding site for ADP. Residue Gly238 participates in CDP binding. Gly239 serves as a coordination point for AMP. Gly239 contributes to the ATP binding site. N6-acetyllysine is present on residues Lys267 and Lys291. Position 313 (Gly313) interacts with AMP. Gly313 lines the ATP pocket. An N6-(2-hydroxyisobutyryl)lysine modification is found at Lys323. CDP contacts are provided by Gly338, Val340, and Phe343. An ADP-binding site is contributed by Phe343. Glu344 contributes to the AMP binding site. Glu344 contributes to the ATP binding site. An N6-acetyllysine modification is found at Lys361. 2 residues coordinate ATP: Asp375 and Thr376. Position 375 (Asp375) interacts with Mg(2+).

It belongs to the phosphoglycerate kinase family. In terms of assembly, monomer. Interacts with kinase MAPK1/ERK2; the interaction is direct, occurs under hypoxic conditions, and promotes its interaction with PIN1. Interacts with peptidyl-prolyl cis-trans isomerase PIN1; the interaction is direct, occurs under hypoxic conditions, and targets the protein to the mitochondrion by promoting interactions with the TOM complex. Interacts with mitochondrial circRNA mcPGK1 (via its 2nd stem-loop); the interaction is direct and targets the protein to the mitochondrion by promoting interactions with the TOM complex. Interacts with pyruvate dehydrogenase kinase PDK1; the interaction is direct, occurs under hypoxic conditions and leads to PDK1-mediated inhibition of pyruvate dehydrogenase complex activity. Requires Mg(2+) as cofactor. Post-translationally, phosphorylated at Ser-203 by MAPK1/ERK2 under hypoxic conditions, which promotes its mitochondrial targeting. In terms of tissue distribution, mainly expressed in spermatogonia. Localized on the principle piece in the sperm (at protein level). Expression significantly decreased in the testis of elderly men.

The protein resides in the cytoplasm. The protein localises to the cytosol. Its subcellular location is the mitochondrion matrix. The enzyme catalyses (2R)-3-phosphoglycerate + ATP = (2R)-3-phospho-glyceroyl phosphate + ADP. It catalyses the reaction L-seryl-[protein] + ATP = O-phospho-L-seryl-[protein] + ADP + H(+). Its pathway is carbohydrate degradation; glycolysis; pyruvate from D-glyceraldehyde 3-phosphate: step 2/5. With respect to regulation, specifically inhibited by heterocyclic compound CBR-470-0. In terms of biological role, catalyzes one of the two ATP producing reactions in the glycolytic pathway via the reversible conversion of 1,3-diphosphoglycerate to 3-phosphoglycerate. Both L- and D- forms of purine and pyrimidine nucleotides can be used as substrates, but the activity is much lower on pyrimidines. In addition to its role as a glycolytic enzyme, it seems that PGK1 acts as a polymerase alpha cofactor protein (primer recognition protein). Acts as a protein kinase when localized to the mitochondrion where it phosphorylates pyruvate dehydrogenase kinase PDK1 to inhibit pyruvate dehydrogenase complex activity and suppress the formation of acetyl-coenzyme A from pyruvate, and consequently inhibit oxidative phosphorylation and promote glycolysis. May play a role in sperm motility. This chain is Phosphoglycerate kinase 1 (PGK1), found in Homo sapiens (Human).